Consider the following 140-residue polypeptide: ATP synthase epsilon chain (140 aa).

It belongs to the ATPase epsilon chain family. As to quaternary structure, F-type ATPases have 2 components, CF(1) - the catalytic core - and CF(0) - the membrane proton channel. CF(1) has five subunits: alpha(3), beta(3), gamma(1), delta(1), epsilon(1). CF(0) has three main subunits: a, b and c.

The protein localises to the cell inner membrane. Produces ATP from ADP in the presence of a proton gradient across the membrane. The chain is ATP synthase epsilon chain from Legionella pneumophila (strain Lens).